Consider the following 544-residue polypeptide: Chaperonin GroEL (544 aa).

ATP-binding positions include 29–32 (TLGP), 86–90 (DGTTT), Gly413, 478–480 (NAA), and Asp494.

Belongs to the chaperonin (HSP60) family. In terms of assembly, forms a cylinder of 14 subunits composed of two heptameric rings stacked back-to-back. Interacts with the co-chaperonin GroES.

It is found in the cytoplasm. It carries out the reaction ATP + H2O + a folded polypeptide = ADP + phosphate + an unfolded polypeptide.. Functionally, together with its co-chaperonin GroES, plays an essential role in assisting protein folding. The GroEL-GroES system forms a nano-cage that allows encapsulation of the non-native substrate proteins and provides a physical environment optimized to promote and accelerate protein folding. This Lysinibacillus sphaericus (strain C3-41) protein is Chaperonin GroEL.